The chain runs to 362 residues: Probable endopolygalacturonase B (362 aa).

An N-terminal signal peptide occupies residues 1–20; sequence MHFLQNAFVAATMGAAPAAA. The propeptide occupies 21 to 25; the sequence is TPLEK. A disulfide bond links C28 and C43. PbH1 repeat units follow at residues 155–184, 185–206, 207–227, 236–257, 265–287, and 299–344; these read ADHL…DIGQ, STYI…AINS, GEHI…SIGS, VNDV…RIKT, VENV…VVEQ, and TNGV…DVTG. Residue D199 is the Proton donor of the active site. C201 and C217 are oxidised to a cystine. The active site involves H221. C327 and C332 form a disulfide bridge. An N-linked (GlcNAc...) asparagine glycan is attached at N334. An intrachain disulfide couples C351 to C360.

The protein belongs to the glycosyl hydrolase 28 family.

It is found in the secreted. The catalysed reaction is (1,4-alpha-D-galacturonosyl)n+m + H2O = (1,4-alpha-D-galacturonosyl)n + (1,4-alpha-D-galacturonosyl)m.. Functionally, involved in maceration and soft-rotting of plant tissue. Hydrolyzes the 1,4-alpha glycosidic bonds of de-esterified pectate in the smooth region of the plant cell wall. This chain is Probable endopolygalacturonase B (pgaB), found in Aspergillus kawachii (White koji mold).